Here is a 268-residue protein sequence, read N- to C-terminus: Phosphatidylglycerol--prolipoprotein diacylglyceryl transferase (268 aa).

A run of 3 helical transmembrane segments spans residues 16 to 36, 56 to 76, and 92 to 112; these read FITLRWYGLLIAVAVFIGIWL, IWLVVAAIPAARLYYVAFNWG, and GIAIHGAILGGIVAMAIFTYV. Residue R136 participates in a 1,2-diacyl-sn-glycero-3-phospho-(1'-sn-glycerol) binding. 3 helical membrane-spanning segments follow: residues 175–195, 204–224, and 236–256; these read PTFLYESLWNVGVFLLLLWLF, GTLLMVYAIAYSLGRFWIEGL, and IAQVVSLVAIALGSWGLFRLY.

Belongs to the Lgt family.

It localises to the cell inner membrane. It carries out the reaction L-cysteinyl-[prolipoprotein] + a 1,2-diacyl-sn-glycero-3-phospho-(1'-sn-glycerol) = an S-1,2-diacyl-sn-glyceryl-L-cysteinyl-[prolipoprotein] + sn-glycerol 1-phosphate + H(+). The protein operates within protein modification; lipoprotein biosynthesis (diacylglyceryl transfer). In terms of biological role, catalyzes the transfer of the diacylglyceryl group from phosphatidylglycerol to the sulfhydryl group of the N-terminal cysteine of a prolipoprotein, the first step in the formation of mature lipoproteins. The chain is Phosphatidylglycerol--prolipoprotein diacylglyceryl transferase from Thermosynechococcus vestitus (strain NIES-2133 / IAM M-273 / BP-1).